The sequence spans 267 residues: 4-hydroxy-tetrahydrodipicolinate reductase (267 aa).

NAD(+)-binding positions include 8-13 (GIAGRM), Glu34, 98-100 (GST), and 122-125 (SPNM). The active-site Proton donor/acceptor is the His155. His156 serves as a coordination point for (S)-2,3,4,5-tetrahydrodipicolinate. Residue Lys159 is the Proton donor of the active site. 165–166 (GT) is a (S)-2,3,4,5-tetrahydrodipicolinate binding site.

Belongs to the DapB family.

It is found in the cytoplasm. The enzyme catalyses (S)-2,3,4,5-tetrahydrodipicolinate + NAD(+) + H2O = (2S,4S)-4-hydroxy-2,3,4,5-tetrahydrodipicolinate + NADH + H(+). The catalysed reaction is (S)-2,3,4,5-tetrahydrodipicolinate + NADP(+) + H2O = (2S,4S)-4-hydroxy-2,3,4,5-tetrahydrodipicolinate + NADPH + H(+). The protein operates within amino-acid biosynthesis; L-lysine biosynthesis via DAP pathway; (S)-tetrahydrodipicolinate from L-aspartate: step 4/4. Catalyzes the conversion of 4-hydroxy-tetrahydrodipicolinate (HTPA) to tetrahydrodipicolinate. This Syntrophobacter fumaroxidans (strain DSM 10017 / MPOB) protein is 4-hydroxy-tetrahydrodipicolinate reductase.